The sequence spans 184 residues: ATP-dependent protease subunit HslV (184 aa).

Thr-12 is an active-site residue. Residues Ala-166, Cys-169, and Thr-172 each coordinate Na(+).

The protein belongs to the peptidase T1B family. HslV subfamily. As to quaternary structure, a double ring-shaped homohexamer of HslV is capped on each side by a ring-shaped HslU homohexamer. The assembly of the HslU/HslV complex is dependent on binding of ATP.

It localises to the cytoplasm. It carries out the reaction ATP-dependent cleavage of peptide bonds with broad specificity.. With respect to regulation, allosterically activated by HslU binding. Functionally, protease subunit of a proteasome-like degradation complex believed to be a general protein degrading machinery. This Brucella anthropi (strain ATCC 49188 / DSM 6882 / CCUG 24695 / JCM 21032 / LMG 3331 / NBRC 15819 / NCTC 12168 / Alc 37) (Ochrobactrum anthropi) protein is ATP-dependent protease subunit HslV.